A 239-amino-acid polypeptide reads, in one-letter code: Serine protease SplC (239 aa).

The signal sequence occupies residues 1–36; sequence MNKNIVIKSMAALAILTSATGINAAVVEETQQIANA. Catalysis depends on charge relay system residues histidine 75, aspartate 113, and serine 193.

Belongs to the peptidase S1B family.

It is found in the secreted. This chain is Serine protease SplC (splC), found in Staphylococcus aureus (strain MSSA476).